The following is a 556-amino-acid chain: Formate--tetrahydrofolate ligase (556 aa).

65–72 (TPAGEGKT) contributes to the ATP binding site.

Belongs to the formate--tetrahydrofolate ligase family.

It carries out the reaction (6S)-5,6,7,8-tetrahydrofolate + formate + ATP = (6R)-10-formyltetrahydrofolate + ADP + phosphate. It functions in the pathway one-carbon metabolism; tetrahydrofolate interconversion. The sequence is that of Formate--tetrahydrofolate ligase from Agathobacter rectalis (strain ATCC 33656 / DSM 3377 / JCM 17463 / KCTC 5835 / VPI 0990) (Eubacterium rectale).